Here is a 104-residue protein sequence, read N- to C-terminus: N(4)-acetylcytidine amidohydrolase (104 aa).

The ASCH domain maps to 7–95 (MTFFERFETD…IQDIYPGISQ (89 aa)). K22 acts as the Proton acceptor in catalysis. The active-site Nucleophile is the T25. Catalysis depends on E75, which acts as the Proton donor.

This sequence belongs to the N(4)-acetylcytidine amidohydrolase family.

It carries out the reaction N(4)-acetylcytidine + H2O = cytidine + acetate + H(+). It catalyses the reaction N(4)-acetyl-2'-deoxycytidine + H2O = 2'-deoxycytidine + acetate + H(+). The enzyme catalyses N(4)-acetylcytosine + H2O = cytosine + acetate + H(+). In terms of biological role, catalyzes the hydrolysis of N(4)-acetylcytidine (ac4C). The sequence is that of N(4)-acetylcytidine amidohydrolase from Vibrio atlanticus (strain LGP32) (Vibrio splendidus (strain Mel32)).